Reading from the N-terminus, the 343-residue chain is ATPase GET3 (343 aa).

An ATP-binding site is contributed by Lys-32 to Thr-39. The active site involves Asp-61. ATP contacts are provided by Glu-245 and Asn-272. Cys-283 and Cys-286 together coordinate Zn(2+).

It belongs to the arsA ATPase family. Homodimer.

The protein localises to the cytoplasm. It localises to the endoplasmic reticulum. ATPase required for the post-translational delivery of tail-anchored (TA) proteins to the endoplasmic reticulum. Recognizes and selectively binds the transmembrane domain of TA proteins in the cytosol. This complex then targets to the endoplasmic reticulum by membrane-bound receptors, where the tail-anchored protein is released for insertion. This process is regulated by ATP binding and hydrolysis. ATP binding drives the homodimer towards the closed dimer state, facilitating recognition of newly synthesized TA membrane proteins. ATP hydrolysis is required for insertion. Subsequently, the homodimer reverts towards the open dimer state, lowering its affinity for the membrane-bound receptor, and returning it to the cytosol to initiate a new round of targeting. In Pyricularia oryzae (strain 70-15 / ATCC MYA-4617 / FGSC 8958) (Rice blast fungus), this protein is ATPase GET3.